We begin with the raw amino-acid sequence, 357 residues long: Dynein axonemal assembly factor 10 (357 aa).

WD repeat units follow at residues 63–105 (EKAK…MPVY), 115–154 (NAID…DPVA), 162–205 (ENKR…LRWE), 207–249 (NIKN…PTKG), 257–297 (AHKS…QRSK), and 319–357 (LSTQ…LNKI).

Component of the PAQosome complex which is responsible for the biogenesis of several protein complexes and which consists of R2TP complex members RUVBL1, RUVBL2, RPAP3 and PIH1D1, URI complex members PFDN2, PFDN6, PDRG1, UXT and URI1 as well as ASDURF, POLR2E and DNAAF10/WDR92. Interacts with PIH1D1; the interaction associates DNAAF10 with the R2TP complex. Interacts with several dynein axonemal assembly factors. In terms of tissue distribution, widely expressed with the highest expression in testis.

The protein resides in the dynein axonemal particle. Functionally, key assembly factor specifically required for the stability of axonemal dynein heavy chains in cytoplasm. This chain is Dynein axonemal assembly factor 10, found in Homo sapiens (Human).